A 1117-amino-acid chain; its full sequence is Rhoptry apical surface protein 3 (1117 aa).

Over residues 1-12 the composition is skewed to polar residues; it reads MENRPRQQTSGH. Disordered stretches follow at residues 1–27, 47–243, 258–301, 325–398, 415–442, 490–572, 600–619, and 654–736; these read MENRPRQQTSGHDCSLGTGDDLSSRPG, NHER…SHFT, DSER…NKGI, SDFK…SLST, WNHASPGEGEATEAAGASVSGSSSFLAA, AEAV…ESEL, RPLLSGPPEEEAGNAEELRS, and QDGT…RLQG. Composition is skewed to basic and acidic residues over residues 83-100, 197-209, and 275-300; these read DSNHTVEHEVIKEEDSQK, TPLRRVGEERHVS, and MKPKELDKEAERKQEQLRSSKGDNKG. 2 stretches are compositionally biased toward low complexity: residues 418 to 442 and 490 to 508; these read ASPGEGEATEAAGASVSGSSSFLAA and AEAVAAVGQSSSDSSGDSS. Over residues 510–520 the composition is skewed to basic and acidic residues; the sequence is ESDHSGRERSR. Over residues 530 to 540 the composition is skewed to polar residues; that stretch reads NEITTMRSQRS. A compositionally biased stretch (basic and acidic residues) spans 546–555; sequence FSREPERESD. Polar residues predominate over residues 557-569; sequence GEMTPTGETSGSE. Residues 724–734 are compositionally biased toward basic and acidic residues; sequence DADRKQEEKRL. The BSD domain maps to 752–788; it reads MLSVDRRLRKLHSDTAVRRMGETEFWKLYFYQVFLLM. Residues 829–838 are compositionally biased toward polar residues; the sequence is QTSGFTESDT. Disordered stretches follow at residues 829–848, 858–891, 909–964, 1031–1066, and 1095–1117; these read QTSGFTESDTSSPSPSYGFA, IIPPTGLPDNTEEGEPLSFGGVSLEPKDEEAPEQ, RSPS…GDSP, SSSQVNGRVSTSRGTMGEDRHQDQQGDNRLEGPSHL, and GTCGDTHQPGLACKGKEVQGARA. Residues 839-848 are compositionally biased toward low complexity; that stretch reads SSPSPSYGFA. Positions 909–931 are enriched in low complexity; that stretch reads RSPSLSSSSSGTTSVSARGTGSS. Polar residues predominate over residues 1031 to 1044; that stretch reads SSSQVNGRVSTSRG. Basic and acidic residues-rich tracts occupy residues 1046 to 1062 and 1108 to 1117; these read MGEDRHQDQQGDNRLEG and KGKEVQGARA.

Interacts with RASP2.

It is found in the cytoplasmic vesicle. It localises to the secretory vesicle. Its subcellular location is the rhoptry membrane. The chain is Rhoptry apical surface protein 3 from Toxoplasma gondii (strain ATCC 50853 / GT1).